Consider the following 484-residue polypeptide: HSPB1-associated protein 1 (484 aa).

The segment at 1–26 is disordered; that stretch reads MAARPGAITNADSASGGGEEEGKHVK. An interaction with HSPB1 region spans residues 88–208; sequence ETACNYVEAT…EDTPFLYPTR (121 aa). In terms of domain architecture, JmjC spans 124–288; that stretch reads WAYADYKYFV…HQTRVEEAIT (165 aa). The disordered stretch occupies residues 396-429; it reads TPSSEEPSSERGGIFENDGEDFVSKNGKSFGKRQ.

As to quaternary structure, interacts with CRYAB and HSPB1.

It localises to the cytoplasm. In terms of biological role, may play a role in cellular stress response. The protein is HSPB1-associated protein 1 (HSPBAP1) of Bos taurus (Bovine).